Reading from the N-terminus, the 322-residue chain is Arginase-1 (322 aa).

Residues 1 to 27 (MSSKPQSIGVIGAPFSKGQPRGGVEEG) form a disordered region. Position 7 is a phosphoserine (Ser7). Lys17 is modified (N6-succinyllysine). Ser62 carries the post-translational modification Phosphoserine. Lys75 is subject to N6-succinyllysine. Mn(2+) contacts are provided by His101, Asp124, His126, and Asp128. Substrate contacts are provided by residues 126–130 (HTDIN), 137–139 (TGN), and Asp183. Position 217 is a phosphoserine (Ser217). Residues Asp232 and Asp234 each contribute to the Mn(2+) site. Residues Thr246 and Glu277 each coordinate substrate.

This sequence belongs to the arginase family. As to quaternary structure, homotrimer. Interacts with CMTM6. Requires Mn(2+) as cofactor.

Its subcellular location is the cytoplasm. It carries out the reaction L-arginine + H2O = urea + L-ornithine. Its pathway is nitrogen metabolism; urea cycle; L-ornithine and urea from L-arginine: step 1/1. This Bos taurus (Bovine) protein is Arginase-1 (ARG1).